We begin with the raw amino-acid sequence, 373 residues long: Probable pectin lyase D (373 aa).

The signal sequence occupies residues 1-24 (MKYAAALTAVAALAARAAAVGVSG). 2 disulfides stabilise this stretch: Cys-82/Cys-101 and Cys-91/Cys-225. The N-linked (GlcNAc...) asparagine glycan is linked to Asn-128. Arg-255 is an active-site residue. Residue Asn-274 is glycosylated (N-linked (GlcNAc...) asparagine). Cysteines 321 and 329 form a disulfide. An N-linked (GlcNAc...) asparagine glycan is attached at Asn-348. Over residues 354–366 (LPSADAASTSPAS) the composition is skewed to low complexity. Residues 354 to 373 (LPSADAASTSPASNAGQGNL) form a disordered region.

It belongs to the polysaccharide lyase 1 family.

It localises to the secreted. It catalyses the reaction Eliminative cleavage of (1-&gt;4)-alpha-D-galacturonan methyl ester to give oligosaccharides with 4-deoxy-6-O-methyl-alpha-D-galact-4-enuronosyl groups at their non-reducing ends.. Functionally, pectinolytic enzymes consist of four classes of enzymes: pectin lyase, polygalacturonase, pectin methylesterase and rhamnogalacturonase. Among pectinolytic enzymes, pectin lyase is the most important in depolymerization of pectin, since it cleaves internal glycosidic bonds of highly methylated pectins. This is Probable pectin lyase D (pelD) from Aspergillus niger (strain ATCC MYA-4892 / CBS 513.88 / FGSC A1513).